Reading from the N-terminus, the 434-residue chain is Trigger factor (434 aa).

Positions 161–246 (GKRVSIDFVG…VNKVEARELP (86 aa)) constitute a PPIase FKBP-type domain.

The protein belongs to the FKBP-type PPIase family. Tig subfamily.

It localises to the cytoplasm. It carries out the reaction [protein]-peptidylproline (omega=180) = [protein]-peptidylproline (omega=0). Involved in protein export. Acts as a chaperone by maintaining the newly synthesized protein in an open conformation. Functions as a peptidyl-prolyl cis-trans isomerase. This is Trigger factor from Vibrio parahaemolyticus serotype O3:K6 (strain RIMD 2210633).